The following is a 430-amino-acid chain: Adenylosuccinate synthetase (430 aa).

GTP is bound by residues 12-18 (GDEGKGK) and 40-42 (GHT). The Proton acceptor role is filled by Asp13. Mg(2+)-binding residues include Asp13 and Gly40. IMP-binding positions include 13-16 (DEGK), 38-41 (NAGH), Thr130, Arg144, Gln224, Thr239, and Arg303. Residue His41 is the Proton donor of the active site. 299–305 (TVTGRKR) contacts substrate. Residues Arg305, 331–333 (KLD), and 413–415 (STS) contribute to the GTP site.

The protein belongs to the adenylosuccinate synthetase family. In terms of assembly, homodimer. The cofactor is Mg(2+).

It is found in the cytoplasm. The catalysed reaction is IMP + L-aspartate + GTP = N(6)-(1,2-dicarboxyethyl)-AMP + GDP + phosphate + 2 H(+). Its pathway is purine metabolism; AMP biosynthesis via de novo pathway; AMP from IMP: step 1/2. Its function is as follows. Plays an important role in the de novo pathway of purine nucleotide biosynthesis. Catalyzes the first committed step in the biosynthesis of AMP from IMP. The polypeptide is Adenylosuccinate synthetase (Cereibacter sphaeroides (strain ATCC 17023 / DSM 158 / JCM 6121 / CCUG 31486 / LMG 2827 / NBRC 12203 / NCIMB 8253 / ATH 2.4.1.) (Rhodobacter sphaeroides)).